The sequence spans 275 residues: Methylglyoxal reductase DkgA (275 aa).

Tyrosine 51 (proton donor) is an active-site residue. A substrate-binding site is contributed by histidine 107. 187–241 lines the NADP(+) pocket; it reads SPLAQGGKGVFDQKVIRDLADKYGKTPAQIVIRWHLDSGLVVIPKSVTPSRIAEN.

The protein belongs to the aldo/keto reductase family. As to quaternary structure, monomer.

The protein resides in the cytoplasm. It catalyses the reaction hydroxyacetone + NADP(+) = methylglyoxal + NADPH + H(+). The enzyme catalyses a primary alcohol + NADP(+) = an aldehyde + NADPH + H(+). The catalysed reaction is 2-dehydro-L-idonate + NADP(+) = 2,5-didehydro-D-gluconate + NADPH + H(+). Its function is as follows. Aldo-keto reductase that significantly contributes to cellular methylglyoxal detoxification by catalyzing the NADPH-dependent conversion of methylglyoxal to acetol. It also exhibits fairly high activity with glyoxal. Shows broad specificity and can use aromatic aldehydes such as 4-nitrobenzaldehyde, 3-nitrobenzaldehyde and benzaldehyde, and phenylglyoxal. Shows beta-keto ester reductase activity toward ethyl acetoacetate and a variety of 2-substituted derivatives. Also catalyzes the reduction of 2,5-diketo-D-gluconic acid (25DKG) to 2-keto-L-gulonic acid (2KLG) and could be involved in ketogluconate metabolism. However, the specific activity of the enzyme toward 2,5-diketo-D-gluconate was reported to be almost 400-fold lower than its activity toward methylglyoxal. Can catalyze in vitro the NADPH-dependent reduction of furfural, a natural product of lignocellulosic decomposition, to the less toxic product, furfuryl alcohol. However, it is unlikely that furfural is a physiological substrate. This is Methylglyoxal reductase DkgA from Escherichia coli (strain K12).